We begin with the raw amino-acid sequence, 955 residues long: RNA polymerase-associated protein RapA (955 aa).

The Helicase ATP-binding domain occupies 163 to 333; the sequence is EVGHRYAPRV…FARLRLLDPE (171 aa). 176 to 183 contacts ATP; sequence DEVGLGKT. The short motif at 279 to 282 is the DEAH box element; it reads DEAH. The Helicase C-terminal domain maps to 478-642; the sequence is RVEWLLELLL…AVRDELFELL (165 aa).

Belongs to the SNF2/RAD54 helicase family. RapA subfamily. Interacts with the RNAP. Has a higher affinity for the core RNAP than for the holoenzyme. Its ATPase activity is stimulated by binding to RNAP.

In terms of biological role, transcription regulator that activates transcription by stimulating RNA polymerase (RNAP) recycling in case of stress conditions such as supercoiled DNA or high salt concentrations. Probably acts by releasing the RNAP, when it is trapped or immobilized on tightly supercoiled DNA. Does not activate transcription on linear DNA. Probably not involved in DNA repair. This is RNA polymerase-associated protein RapA from Aeromonas hydrophila subsp. hydrophila (strain ATCC 7966 / DSM 30187 / BCRC 13018 / CCUG 14551 / JCM 1027 / KCTC 2358 / NCIMB 9240 / NCTC 8049).